A 614-amino-acid polypeptide reads, in one-letter code: Adenylate kinase 7 (614 aa).

Positions 258 to 503 (PIKICILGPP…KEIGKPRNYG (246 aa)) are adenylate kinase. Position 268–273 (268–273 (AVGKSS)) interacts with ATP. An NMP region spans residues 288–346 (KMKDVIAEAIAKLEAIVAPKDSVEGEEEGEEEEEEENVDDAQELLDGIKESMEQNAGRL). The segment at 308-327 (DSVEGEEEGEEEEEEENVDD) is disordered. Over residues 311-327 (EGEEEGEEEEEEENVDD) the composition is skewed to acidic residues. AMP contacts are provided by residues 323-346 (ENVDDAQELLDGIKESMEQNAGRL), 373-376 (GFPK), and Q380. Positions 376-568 (KTYDQAKDLF…EERELLEVQS (193 aa)) form a coiled coil. The interval 428–438 (NLPESVVAGTH) is LID. R446 contributes to the AMP binding site. G478 is a binding site for ATP. Residues 570–614 (PLRNYLMTYVMPTLMQGLNECCKVRPEDPVDFLAEYLFKNNPEMQ) are DPY-30.

The protein in the central section; belongs to the adenylate kinase family. In the C-terminal section; belongs to the dpy-30 family.

The protein localises to the cytoplasm. The protein resides in the cytosol. It is found in the cell projection. It localises to the cilium. Its subcellular location is the flagellum. The catalysed reaction is AMP + ATP = 2 ADP. It catalyses the reaction a 2'-deoxyribonucleoside 5'-diphosphate + ATP = a 2'-deoxyribonucleoside 5'-triphosphate + ADP. The enzyme catalyses a ribonucleoside 5'-diphosphate + ATP = a ribonucleoside 5'-triphosphate + ADP. Its function is as follows. Nucleoside monophosphate (NMP) kinase that catalyzes the reversible transfer of the terminal phosphate group between nucleoside triphosphates and monophosphates. Has highest activity toward AMP, and weaker activity toward dAMP, CMP and dCMP. Also displays broad nucleoside diphosphate kinase activity. Involved in maintaining ciliary structure and function. The sequence is that of Adenylate kinase 7 (Ak7) from Mus musculus (Mouse).